Reading from the N-terminus, the 128-residue chain is MAFTGKFEMESEKNYDEFMKLLGLPSDVVEKSRNIKIVTEIKQDGQDFTWSHHYSGGQIMTNKFTIGKESEIQTFGGKKFKAVVNMEGGKVVANFPNYQHTSEIKGDKLVEVSSIGGVTYERVSKRLA.

Ala-2 bears the N-acetylalanine mark.

This sequence belongs to the calycin superfamily. Fatty-acid binding protein (FABP) family. In terms of tissue distribution, expressed in ileum.

Its subcellular location is the cytoplasm. It is found in the membrane. In terms of biological role, binds to bile acids and is involved in enterohepatic bile acid metabolism. Required for efficient apical to basolateral transport of conjugated bile acids in ileal enterocytes. Stimulates gastric acid and pepsinogen secretion. This Oryctolagus cuniculus (Rabbit) protein is Gastrotropin (FABP6).